The chain runs to 746 residues: MDKYKVAGKFGLPDITVAEMESLASFCEAVLPSVQPPPEELSGEGDNHRNKEALRSFYSTSGSKTPVLRQSIELVTKRGTIEAYIATRLILFLLATRLGTLLICGTECLVSRWPFVEKFSELSLEKRERVLQKQFKNWILTPIRAAFVYIKVAFLFCFFSRVNPNGENPAWEAIGYRVNPDENKPSETHNERPLEKGIVETMEETEQTLLESLAHKGLEAVLDTEHDAIRIKCDVVVVGSGSGGGVAASVLAKSGLKVVVLEKGSYFTPSEHRPFEGPGLDKLYENGGILPSVDGSFMVLAGATVGGGSAVNWSACIKTPKSVLQEWSEDQNIPLFGTKEYLTAMEVVWKRMGVTEKCELESFQNQILRKGCENLGFNVENVPRNSSESHYCGSCGYGCRQGDKKGSDRTWLVDAVGHGAVILTGCKAERFILEKNGSNKGGKQMKCLGVMAKSLNGNIAKMLKIEAKVTVSAGGALLTPPLMISSGLRNRNIGKNLHLHPVLMAWGYFPDKESSNISFKGNSYEGGIITSVSKVLSEDSEVRAIIETPQLGPGSFSVLTPWTSGLDMKKRMARYSRTASLITIVRDRGSGEVKTEGRINYTVDKTDRDNLKAGLRESLRILIAAGAEEVGTHRSDGQRLICKGVNENSIQEFLDSVSTEEGAKGMTEKWNVYSSAHQMGSCRIGENEKEGAIDLNGESWEAEKLFVCDASALPSAVGVNPMITVMSTAYCISTRIAKSMTTGLSH.

The chain crosses the membrane as a helical span at residues 139 to 159 (ILTPIRAAFVYIKVAFLFCFF). Residue 233–248 (CDVVVVGSGSGGGVAA) coordinates FAD. The active-site Proton acceptor is the His-677.

The protein belongs to the GMC oxidoreductase family.

The protein localises to the membrane. It carries out the reaction a long-chain primary fatty alcohol + O2 = a long-chain fatty aldehyde + H2O2. Functionally, long-chain fatty alcohol oxidase involved in the omega-oxidation pathway of lipid degradation. The chain is Long-chain-alcohol oxidase FAO3 (FAO3) from Arabidopsis thaliana (Mouse-ear cress).